The chain runs to 103 residues: Small ribosomal subunit protein uS10 (103 aa).

This sequence belongs to the universal ribosomal protein uS10 family. Part of the 30S ribosomal subunit.

Functionally, involved in the binding of tRNA to the ribosomes. This is Small ribosomal subunit protein uS10 from Pseudomonas savastanoi pv. phaseolicola (strain 1448A / Race 6) (Pseudomonas syringae pv. phaseolicola (strain 1448A / Race 6)).